The sequence spans 361 residues: MERITVTLGERSYPISIASGLFSQEAAFWPLRSGEQAMLVTNETLAKLYLAPVQRTLERAGVRVGQVILPDGEQFKSLSVLERVFSALLENNHGRDTTLVALGGGVIGDLIGFAAACYQRGVRFIQVPTTLLAQVDSSVGGKTAVNHPLGKNMIGAFYQPASVTIDIDCLQTLPLRELASGLAEVIKYGIIMDADFFRWLETQMDALLRLEPSALVYCIRRCCELKAQVVAEDEREQGRRALLNLGHTFGHAIEAEMGYGNWLHGEAVAAGTMMAARVACRLGYLQPQQAERMSALLTRAGLPVQGPAGMIPDAYLPHMLRDKKVLGGTLRLVLPTAIGSAEVFAGVSHDVVRDAIADCLA.

Residues 71–76, 105–109, 129–130, Lys142, Lys151, and 169–172 contribute to the NAD(+) site; these read DGEQFK, GVIGD, TT, and CLQT. Zn(2+) is bound by residues Glu184, His247, and His264.

Belongs to the sugar phosphate cyclases superfamily. Dehydroquinate synthase family. Co(2+) serves as cofactor. Requires Zn(2+) as cofactor. The cofactor is NAD(+).

It localises to the cytoplasm. It catalyses the reaction 7-phospho-2-dehydro-3-deoxy-D-arabino-heptonate = 3-dehydroquinate + phosphate. It participates in metabolic intermediate biosynthesis; chorismate biosynthesis; chorismate from D-erythrose 4-phosphate and phosphoenolpyruvate: step 2/7. In terms of biological role, catalyzes the conversion of 3-deoxy-D-arabino-heptulosonate 7-phosphate (DAHP) to dehydroquinate (DHQ). The sequence is that of 3-dehydroquinate synthase from Edwardsiella ictaluri (strain 93-146).